Consider the following 361-residue polypeptide: Phosphoserine aminotransferase (361 aa).

Arginine 42 contributes to the L-glutamate binding site. Residues 76 to 77 (AS), tryptophan 102, threonine 152, aspartate 172, and glutamine 195 each bind pyridoxal 5'-phosphate. At lysine 196 the chain carries N6-(pyridoxal phosphate)lysine. Residue 237-238 (NT) participates in pyridoxal 5'-phosphate binding.

It belongs to the class-V pyridoxal-phosphate-dependent aminotransferase family. SerC subfamily. In terms of assembly, homodimer. It depends on pyridoxal 5'-phosphate as a cofactor.

Its subcellular location is the cytoplasm. It carries out the reaction O-phospho-L-serine + 2-oxoglutarate = 3-phosphooxypyruvate + L-glutamate. The catalysed reaction is 4-(phosphooxy)-L-threonine + 2-oxoglutarate = (R)-3-hydroxy-2-oxo-4-phosphooxybutanoate + L-glutamate. The protein operates within amino-acid biosynthesis; L-serine biosynthesis; L-serine from 3-phospho-D-glycerate: step 2/3. In terms of biological role, catalyzes the reversible conversion of 3-phosphohydroxypyruvate to phosphoserine and of 3-hydroxy-2-oxo-4-phosphonooxybutanoate to phosphohydroxythreonine. This is Phosphoserine aminotransferase from Halalkalibacterium halodurans (strain ATCC BAA-125 / DSM 18197 / FERM 7344 / JCM 9153 / C-125) (Bacillus halodurans).